A 370-amino-acid polypeptide reads, in one-letter code: MKIDAIEAVIVDVPTKRPIQMSITTVHQQSYVIVRVYSEGLVGVGEGGSVGGPVWSAECAETIKIIVERYLAPHLLGTDAFNVSGALQTMARAVTGNASAKAAVEMALLDLKARALGVSIAELLGGPLRSAIPIAWTLASGDTKRDLDSAVEMIERRRHNRFKVKLGFRSPQDDLIHMEALSNSLGSKAYLRVDVNQAWDEQVASVYIPELEALGVELIEQPVGRENTQALRRLSDNNRVAIMADESLSTLASAFDLARDRSVDVFSLKLCNMGGVSATQKIAAVAEASGIASYGGTMLDSTIGTSVALQLYSTVPSLPFGCELIGPFVLADTLSHEPLEIRDYELQVPTGVGHGMTLDEDKVRQYARVS.

The Proton acceptor role is filled by Lys-165. Residues Asp-194, Glu-220, and Asp-245 each coordinate Mn(2+). Glu-323 functions as the Proton donor in the catalytic mechanism.

It belongs to the mandelate racemase/muconate lactonizing enzyme family. The cofactor is Mn(2+).

It catalyses the reaction 2-[(2R)-2-chloro-2,5-dihydro-5-oxofuryl]acetate = 3-chloro-cis,cis-muconate + H(+). The protein operates within aromatic compound metabolism; 3-chlorocatechol degradation. This Cupriavidus pinatubonensis (strain JMP 134 / LMG 1197) (Cupriavidus necator (strain JMP 134)) protein is Chloromuconate cycloisomerase (tfdDI).